A 152-amino-acid polypeptide reads, in one-letter code: UPF0225 protein YchJ (152 aa).

It belongs to the UPF0225 family.

This is UPF0225 protein YchJ (ychJ) from Salmonella typhimurium (strain LT2 / SGSC1412 / ATCC 700720).